The sequence spans 131 residues: Small ribosomal subunit protein uS8 (131 aa).

It belongs to the universal ribosomal protein uS8 family. As to quaternary structure, part of the 30S ribosomal subunit. Contacts proteins S5 and S12.

In terms of biological role, one of the primary rRNA binding proteins, it binds directly to 16S rRNA central domain where it helps coordinate assembly of the platform of the 30S subunit. This Nautilia profundicola (strain ATCC BAA-1463 / DSM 18972 / AmH) protein is Small ribosomal subunit protein uS8.